We begin with the raw amino-acid sequence, 187 residues long: UPF0301 protein YqgE (187 aa).

Belongs to the UPF0301 (AlgH) family.

The chain is UPF0301 protein YqgE from Escherichia fergusonii (strain ATCC 35469 / DSM 13698 / CCUG 18766 / IAM 14443 / JCM 21226 / LMG 7866 / NBRC 102419 / NCTC 12128 / CDC 0568-73).